We begin with the raw amino-acid sequence, 97 residues long: Coiled-coil domain-containing protein 167 (97 aa).

The stretch at 10 to 79 (GVALEIDGLE…LRQENRKNML (70 aa)) forms a coiled coil. A helical membrane pass occupies residues 78 to 95 (MLLSVAIFILLTLVYAYW).

Its subcellular location is the membrane. The protein is Coiled-coil domain-containing protein 167 (CCDC167) of Homo sapiens (Human).